A 476-amino-acid polypeptide reads, in one-letter code: WASH complex subunit 1 (476 aa).

The required for WASH complex assembly stretch occupies residues 1–54; that stretch reads MTTVAQKHFLEGQTYSVPLIQPDLRREEAVQQVADALQYLQKVSGDIFNRISQR. Disordered stretches follow at residues 273–412 and 427–476; these read SAPS…QGGD and GISG…DWES. Polar residues predominate over residues 284-296; it reads TFSTESVEPSQAD. Over residues 302-333 the composition is skewed to pro residues; the sequence is LLPPPPPPPPPPPPVMPTTVPPPPPLPQPTAP. Residues 354 to 476 form a VCA region; it reads QGAPKEVVNP…GEEDEDDWES (123 aa). A WH2 domain is found at 366-388; it reads GRASLLESIRQAGGIGKANLRSV. The span at 387 to 403 shows a compositional bias: basic and acidic residues; the sequence is SVKERKLEKKKQKEQEQ. Positions 467-476 are enriched in acidic residues; it reads GEEDEDDWES.

This sequence belongs to the WASH1 family. Component of the WASH complex.

It localises to the early endosome membrane. The protein localises to the recycling endosome membrane. Functionally, acts as a nucleation-promoting factor at the surface of endosomes, where it recruits and activates the Arp2/3 complex to induce actin polymerization, playing a key role in the fission of tubules that serve as transport intermediates during endosome sorting. This chain is WASH complex subunit 1, found in Gallus gallus (Chicken).